Here is a 110-residue protein sequence, read N- to C-terminus: Large ribosomal subunit protein P1B (110 aa).

A compositionally biased stretch (low complexity) spans proline 69–alanine 85. The tract at residues proline 69–aspartate 110 is disordered. Residues lysine 95–methionine 104 are compositionally biased toward acidic residues.

It belongs to the eukaryotic ribosomal protein P1/P2 family. As to quaternary structure, component of the large ribosomal subunit (LSU). Mature yeast ribosomes consist of a small (40S) and a large (60S) subunit. The 40S small subunit contains 1 molecule of ribosomal RNA (18S rRNA) and at least 33 different proteins. The large 60S subunit contains 3 rRNA molecules (25S, 5.8S and 5S rRNA) and at least 46 different proteins. The acidic ribosomal P-proteins form the stalk structure of the 60S subunit. They are organized as a pentameric complex in which uL10/P0 interacts with 2 heterodimers of P1 and P2 proteins.

The protein resides in the cytoplasm. Functionally, component of the ribosome, a large ribonucleoprotein complex responsible for the synthesis of proteins in the cell. The small ribosomal subunit (SSU) binds messenger RNAs (mRNAs) and translates the encoded message by selecting cognate aminoacyl-transfer RNA (tRNA) molecules. The large subunit (LSU) contains the ribosomal catalytic site termed the peptidyl transferase center (PTC), which catalyzes the formation of peptide bonds, thereby polymerizing the amino acids delivered by tRNAs into a polypeptide chain. The nascent polypeptides leave the ribosome through a tunnel in the LSU and interact with protein factors that function in enzymatic processing, targeting, and the membrane insertion of nascent chains at the exit of the ribosomal tunnel. This is Large ribosomal subunit protein P1B (rpp102) from Schizosaccharomyces pombe (strain 972 / ATCC 24843) (Fission yeast).